A 427-amino-acid polypeptide reads, in one-letter code: D-inositol 3-phosphate glycosyltransferase (427 aa).

His12 contacts 1D-myo-inositol 3-phosphate. Residues 18–19 (QP) and Gly26 contribute to the UDP-N-acetyl-alpha-D-glucosamine site. 1D-myo-inositol 3-phosphate contacts are provided by residues 23–28 (DAGGMN), Lys81, Tyr113, Thr137, and Arg157. 3 residues coordinate UDP-N-acetyl-alpha-D-glucosamine: Arg234, Lys239, and Arg297. Mg(2+)-binding residues include Tyr306, Gln307, and Ala309. Glu319 and Glu327 together coordinate UDP-N-acetyl-alpha-D-glucosamine. Thr333 is a Mg(2+) binding site.

It belongs to the glycosyltransferase group 1 family. MshA subfamily. In terms of assembly, homodimer.

It carries out the reaction 1D-myo-inositol 3-phosphate + UDP-N-acetyl-alpha-D-glucosamine = 1D-myo-inositol 2-acetamido-2-deoxy-alpha-D-glucopyranoside 3-phosphate + UDP + H(+). Catalyzes the transfer of a N-acetyl-glucosamine moiety to 1D-myo-inositol 3-phosphate to produce 1D-myo-inositol 2-acetamido-2-deoxy-glucopyranoside 3-phosphate in the mycothiol biosynthesis pathway. In Corynebacterium diphtheriae (strain ATCC 700971 / NCTC 13129 / Biotype gravis), this protein is D-inositol 3-phosphate glycosyltransferase.